The primary structure comprises 394 residues: Thioredoxin-interacting protein (394 aa).

Lys-212 participates in a covalent cross-link: Glycyl lysine isopeptide (Lys-Gly) (interchain with G-Cter in ubiquitin). Ser-361 is subject to Phosphoserine.

This sequence belongs to the arrestin family. As to quaternary structure, homodimer; disulfide-linked. Interacts with TXN/thioredoxin through its redox-active site. Interacts with transcriptional repressors ZBTB16, ZBTB32 and HDAC1. Interacts with DDIT4. Post-translationally, ubiquitinated; undergoes heterotypic 'Lys-48'-/'Lys-63'-branched polyubiquitination catalyzed by ITCH and UBR5 resulting in proteasomal degradation. Deubiquitinated by USP5, leading to TXNIP stabilization.

The protein resides in the cytoplasm. Functionally, may act as an oxidative stress mediator by inhibiting thioredoxin activity or by limiting its bioavailability. Interacts with COPS5 and restores COPS5-induced suppression of CDKN1B stability, blocking the COPS5-mediated translocation of CDKN1B from the nucleus to the cytoplasm. Functions as a transcriptional repressor, possibly by acting as a bridge molecule between transcription factors and corepressor complexes, and over-expression will induce G0/G1 cell cycle arrest. Required for the maturation of natural killer cells. Acts as a suppressor of tumor cell growth. Inhibits the proteasomal degradation of DDIT4, and thereby contributes to the inhibition of the mammalian target of rapamycin complex 1 (mTORC1). The polypeptide is Thioredoxin-interacting protein (Txnip) (Rattus norvegicus (Rat)).